A 401-amino-acid polypeptide reads, in one-letter code: Acetate kinase (401 aa).

Residue asparagine 10 coordinates Mg(2+). Lysine 17 lines the ATP pocket. Arginine 91 provides a ligand contact to substrate. Aspartate 150 (proton donor/acceptor) is an active-site residue. ATP-binding positions include histidine 210–glycine 214, aspartate 285–arginine 287, and glycine 333–asparagine 337. Glutamate 387 is a binding site for Mg(2+).

Belongs to the acetokinase family. In terms of assembly, homodimer. It depends on Mg(2+) as a cofactor. Mn(2+) serves as cofactor.

It is found in the cytoplasm. It catalyses the reaction acetate + ATP = acetyl phosphate + ADP. Its pathway is metabolic intermediate biosynthesis; acetyl-CoA biosynthesis; acetyl-CoA from acetate: step 1/2. Catalyzes the formation of acetyl phosphate from acetate and ATP. Can also catalyze the reverse reaction. In Pasteurella multocida (strain Pm70), this protein is Acetate kinase.